A 590-amino-acid chain; its full sequence is MSRQSSVSFRSGGSRSFSTASAITPSVSRTSFTSVSRSGGGGGGGFGRVSLAGACGVGGYGSRSLYNLGGSKRISISTSGGSFRNRFGAGAGGGYGFGGGAGSGFGFGGGAGGGFGLGGGAGFGGGFGGPGFPVCPPGGIQEVTVNQSLLTPLNLQIDPSIQRVRTEEREQIKTLNNKFASFIDKVRFLEQQNKVLDTKWTLLQEQGTKTVRQNLEPLFEQYINNLRRQLDSIVGERGRLDSELRNMQDLVEDFKNKYEDEINKRTTAENEFVMLKKDVDAAYMNKVELEAKVDALMDEINFMKMFFDAELSQMQTHVSDTSVVLSMDNNRNLDLDSIIAEVKAQYEEIANRSRTEAESWYQTKYEELQQTAGRHGDDLRNTKHEISEMNRMIQRLRAEIDNVKKQCANLQNAIADAEQRGELALKDARNKLAELEEALQKAKQDMARLLREYQELMNTKLALDVEIATYRKLLEGEECRLSGEGVGPVNISVVTSSVSSGYGSGSGYGGGLGGGLGGGLGGGLAGGSSGSYYSSSSGGVGLGGGLSVGGSGFSASSGRGLGVGFGSGGGSSSSVKFVSTTSSSRKSFKS.

Residues 1 to 18 (MSRQSSVSFRSGGSRSFS) are compositionally biased toward low complexity. Positions 1-20 (MSRQSSVSFRSGGSRSFSTA) are disordered. The interval 1 to 167 (MSRQSSVSFR…DPSIQRVRTE (167 aa)) is head. Ser5, Ser8, Ser16, and Ser21 each carry phosphoserine. Phosphothreonine; by CDK1 is present on Thr24. A phosphoserine mark is found at Ser26, Ser36, Ser50, Ser64, Ser71, Ser75, and Ser82. Phosphothreonine; by CDK1 is present on Thr151. The tract at residues 168–203 (EREQIKTLNNKFASFIDKVRFLEQQNKVLDTKWTLL) is coil 1A. Residues 168–481 (EREQIKTLNN…KLLEGEECRL (314 aa)) form the IF rod domain. The linker 1 stretch occupies residues 204–222 (QEQGTKTVRQNLEPLFEQY). The tract at residues 223–315 (INNLRRQLDS…FFDAELSQMQ (93 aa)) is coil 1B. Residues 316–338 (THVSDTSVVLSMDNNRNLDLDSI) form a linker 12 region. The coil 2 stretch occupies residues 339–477 (IAEVKAQYEE…ATYRKLLEGE (139 aa)). Residues 478 to 590 (ECRLSGEGVG…TSSSRKSFKS (113 aa)) form a tail region. The tract at residues 566–590 (GSGGGSSSSVKFVSTTSSSRKSFKS) is disordered. The span at 572–590 (SSSVKFVSTTSSSRKSFKS) shows a compositional bias: low complexity.

This sequence belongs to the intermediate filament family. As to quaternary structure, heterodimer of a type I and a type II keratin. Heterodimer with type I keratin KRT25 leading to the formation of keratin intermediate filament (KIF) network. Forms a heterodimer (via 2B domains) with KRT14 (via 2B domains). Interacts with PLEC isoform 1C, when in a heterodimer with KRT14. Interacts with TCHP. Interacts with EPPK1. Interacts with AMELX. Interacts with PKP1 (via N-terminus) and PKP2. In terms of processing, phosphorylated by CDK1, AURKB and Rho-kinase, phosphorylation is regulated by the cell cycle. Thr-24 phosphorylation, mediated by CDK1, peaks during prometaphase or metaphase cells with phosphorylated filamentous structures evident throughout the cytoplasm during early mitosis. CDK1 phosphorylates Thr-24 in mitotic cells at the site of injury. Post-translationally, O-glycosylated. In terms of tissue distribution, expressed in corneal epithelium (at protein level). Expressed in keratinocytes (at protein level).

The protein localises to the cytoplasm. Required for the formation of keratin intermediate filaments in the basal epidermis and maintenance of the skin barrier in response to mechanical stress. Regulates the recruitment of Langerhans cells to the epidermis, potentially by modulation of the abundance of macrophage chemotactic cytokines, macrophage inflammatory cytokines and CTNND1 localization in keratinocytes. The polypeptide is Keratin, type II cytoskeletal 5 (KRT5) (Homo sapiens (Human)).